Reading from the N-terminus, the 636-residue chain is Receptor-like kinase LIP1 (636 aa).

Positions 18–57 are disordered; sequence NAPCTTNETNDDNVEHDEFRPPVVATTKRTEEREPAEQQP. One can recognise a Protein kinase domain in the interval 74–352; sequence FRQECLLGEG…SDVMVALSFL (279 aa). ATP-binding positions include 80–88 and Lys103; that span reads LGEGGFGRV. The active-site Proton acceptor is the Asp201. Residues Ser205 and Ser236 each carry the phosphoserine modification. Residue Thr242 is modified to Phosphothreonine. Position 250 is a phosphotyrosine (Tyr250). The disordered stretch occupies residues 389-636; that stretch reads FCISRKDVGN…EEEHISSDHD (248 aa). Residues 403-434 are a coiled coil; it reads SSDSEDEEEEKEQKAEKEEESTSKKRQEQEET. A compositionally biased stretch (basic and acidic residues) spans 413–431; sequence KEQKAEKEEESTSKKRQEQ. The segment covering 432-455 has biased composition (acidic residues); it reads EETATDSDDESDSNSEKDQEEEQS. A compositionally biased stretch (polar residues) spans 480–489; the sequence is TNATAQSLKI. 2 stretches are compositionally biased toward basic and acidic residues: residues 522-531 and 554-566; these read DSGRDHDDSS and HETRSYSDHDDSP. The span at 567-576 shows a compositional bias: polar residues; it reads RNTSMRINSL. Composition is skewed to basic and acidic residues over residues 588–603 and 619–636; these read NHQTRLEHIHSSKSED and SLHRIEAKEEEHISSDHD.

This sequence belongs to the protein kinase superfamily. Ser/Thr protein kinase family. Interacts with PRK6. Palmitoylated. Expressed in mature pollen and in germinating pollen tubes.

The protein localises to the cell membrane. It is found in the cytoplasm. Involved in pollen tube guidance into micropyle. Participates in perception of the ovule-secreted peptide signal LURE1. This chain is Receptor-like kinase LIP1, found in Arabidopsis thaliana (Mouse-ear cress).